The following is a 298-amino-acid chain: Enoyl-CoA hydratase ACTT6 (298 aa).

It belongs to the enoyl-CoA hydratase/isomerase family.

It functions in the pathway mycotoxin biosynthesis. Its function is as follows. Enoyl-CoA hydratase; part of the gene clusters that mediate the biosynthesis of the host-selective toxins (HSTs) ACT-toxins responsible for brown spot of tangerine disease by the tangerine pathotype which affects tangerines and mandarins. ACT-toxins consist of three moieties, 9,10-epoxy-8-hydroxy-9-methyl-decatrienoic acid (EDA), valine and a polyketide. ACT-toxin I is toxic to both citrus and pear; toxin II the 5''-deoxy derivative of ACT-toxin I, is highly toxic to pear and slightly toxic to citrus. On cellular level, ACT-toxins affect plasma membrane of susceptible cells and cause a sudden increase in loss of K(+) after a few minutes of toxin treatment. The acyl-CoA ligase ACTT1, the hydrolase ACTT2, the enoyl-CoA hydratases ACTT3 and ACTT6, and the acyl-CoA synthetase ACTT5 are all involved in the biosynthesis of the AK-, AF- and ACT-toxin common 9,10-epoxy-8-hydroxy-9-methyl-decatrienoic acid (EDA) structural moiety. The exact role of each enzyme, and of additional enzymes identified within the AF-toxin clusters have still to be determined. On the other hand, ACTTS1 to ACTTS4 are specific to the tangerine pathotype. The function of ACTTS3 is to elongate the polyketide chain portion of ACT-toxin that is unique to this toxin. The enoyl-reductase ACTTS2 might complement the missing enoyl-reductase (ER) domain in ACTTS3 in the synthesis of the polyketide portion of ACT-toxin. The roles of the nonribosomal peptide synthetases-related proteins ACTTS1 and ACTTS4 have also still not been elucidated. The sequence is that of Enoyl-CoA hydratase ACTT6 from Alternaria alternata (Alternaria rot fungus).